The chain runs to 49 residues: EFLRPLFIMAIAFTLLFFTLHIMAMRNEIWRRRIAAQRRLAARMASREE.

It belongs to the CcmC/CycZ/HelC family.

The protein resides in the cell inner membrane. Its function is as follows. Required for the export of heme to the periplasm for the biogenesis of c-type cytochromes. The sequence is that of Heme exporter protein C from Rhizobium leguminosarum bv. viciae.